The sequence spans 152 residues: 3-hydroxyacyl-[acyl-carrier-protein] dehydratase FabZ (152 aa).

His54 is an active-site residue.

Belongs to the thioester dehydratase family. FabZ subfamily.

It localises to the cytoplasm. The catalysed reaction is a (3R)-hydroxyacyl-[ACP] = a (2E)-enoyl-[ACP] + H2O. In terms of biological role, involved in unsaturated fatty acids biosynthesis. Catalyzes the dehydration of short chain beta-hydroxyacyl-ACPs and long chain saturated and unsaturated beta-hydroxyacyl-ACPs. The polypeptide is 3-hydroxyacyl-[acyl-carrier-protein] dehydratase FabZ (Buchnera aphidicola subsp. Schizaphis graminum (strain Sg)).